The sequence spans 372 residues: MTDALKRLSKEGVAIWLDDLSRKRITSGNLAELIDQQHVVGVTTNPSIFQKAISQGDGYDQQVSDLAARRVTVEEAIRMITTADVRDAADILRPVFDATDGQDGRVSIEVDPRLAHNTKATVAEAKQLAWLVDRPNTLIKIPATKAGIPAITEVIGLGISVNVTLIFSLERYRMVMDAYLAGLEKAKERGLDLSKIHSVASFFVSRVDTEIDKRIDALGTPEAKAARGKAGLANARLAYEAYEAVFSTDRWLALDKAQANKQRPLWASTGVKDPAYKDTMYVEELVAPNTVNTMPEATLEATADHGEIRGNTIAGTYEQARADLDAVEKLGIAYDDVVQLLEEEGVDKFEASWNDLLKSTEAELQRLAPSEG.

Residue Lys140 is the Schiff-base intermediate with substrate of the active site.

The protein belongs to the transaldolase family. Type 2 subfamily.

The protein localises to the cytoplasm. It catalyses the reaction D-sedoheptulose 7-phosphate + D-glyceraldehyde 3-phosphate = D-erythrose 4-phosphate + beta-D-fructose 6-phosphate. The protein operates within carbohydrate degradation; pentose phosphate pathway; D-glyceraldehyde 3-phosphate and beta-D-fructose 6-phosphate from D-ribose 5-phosphate and D-xylulose 5-phosphate (non-oxidative stage): step 2/3. Functionally, transaldolase is important for the balance of metabolites in the pentose-phosphate pathway. The protein is Transaldolase 2 of Streptomyces avermitilis (strain ATCC 31267 / DSM 46492 / JCM 5070 / NBRC 14893 / NCIMB 12804 / NRRL 8165 / MA-4680).